The following is a 182-amino-acid chain: UPF0397 protein llmg_0343 (182 aa).

5 consecutive transmembrane segments (helical) span residues isoleucine 8–isoleucine 28, alanine 42–isoleucine 62, alanine 74–valine 94, isoleucine 114–leucine 134, and glutamine 146–leucine 166.

Belongs to the UPF0397 family.

It localises to the cell membrane. The sequence is that of UPF0397 protein llmg_0343 from Lactococcus lactis subsp. cremoris (strain MG1363).